We begin with the raw amino-acid sequence, 474 residues long: PTS system N-acetylmuramic acid-specific EIIBC component (474 aa).

Positions 1-89 (MAKEISSELL…SELLGEAPVQ (89 aa)) constitute a PTS EIIB type-1 domain. Topologically, residues 1–123 (MAKEISSELL…LAKFATIFTP (123 aa)) are cytoplasmic. C29 acts as the Phosphocysteine intermediate; for EIIB activity in catalysis. The 360-residue stretch at 115–474 (AKFATIFTPL…LFGCRNVNLD (360 aa)) folds into the PTS EIIC type-1 domain. The helical transmembrane segment at 124–144 (LIPGFIAAGLLLGIATLIATV) threads the bilayer. Residues 145-157 (MHVPADAQGTLPD) lie on the Periplasmic side of the membrane. A helical membrane pass occupies residues 158 to 178 (ALNFMKVFSKGLFTFLVILVG). Residues 179-180 (YN) lie on the Cytoplasmic side of the membrane. Residues 181–201 (AAQAFGGTGVNGAIIAALFLL) traverse the membrane as a helical segment. The Periplasmic portion of the chain corresponds to 202–217 (GYNPAATTGYYAGFHD). The chain crosses the membrane as a helical span at residues 218-238 (FFGLPIDPRGNIIGVLIAAWA). Residues 239-260 (CARIEGMVRRFMPDDLDMLLTS) are Cytoplasmic-facing. A helical membrane pass occupies residues 261 to 281 (LITLLITATLAYLIIMPLGGW). Over 282 to 301 (LFEGMSWLFMHLNSNPLGCA) the chain is Periplasmic. The helical transmembrane segment at 302–322 (VLAGLFLIAVVFGVHQGFIPV) threads the bilayer. The Cytoplasmic segment spans residues 323–334 (YLALMDSQGFNS). The chain crosses the membrane as a helical span at residues 335–355 (LFPILSMAGAGQVGAALALYW). Topologically, residues 356–368 (RAQPHSALRSQVR) are periplasmic. Residues 369–389 (GAIIPGLLGVGEPLIYGVTLP) traverse the membrane as a helical segment. Over 390-393 (RMKP) the chain is Cytoplasmic. Residues 394 to 414 (FITACLGGAAGGLFIGLIAWW) traverse the membrane as a helical segment. Over 415-440 (GLPMGLNSAFGPSGLVALPLMTSAQG) the chain is Periplasmic. A helical membrane pass occupies residues 441 to 461 (ILPAMAVYAGGILVAWVCGFI). Residues 462–474 (FTTLFGCRNVNLD) are Cytoplasmic-facing.

The protein resides in the cell inner membrane. It catalyses the reaction N-acetyl-beta-D-muramate(out) + N(pros)-phospho-L-histidyl-[protein] = N-acetyl-beta-D-muramate 6-phosphate(in) + L-histidyl-[protein]. The phosphoenolpyruvate-dependent sugar phosphotransferase system (sugar PTS), a major carbohydrate active transport system, catalyzes the phosphorylation of incoming sugar substrates concomitantly with their translocation across the cell membrane. This system is involved in N-acetylmuramic acid (MurNAc) transport, yielding cytoplasmic MurNAc-6-P. Is also able to take up anhydro-N-acetylmuramic acid (anhMurNAc), but cannot phosphorylate the carbon 6, probably because of the 1,6-anhydro ring. The sequence is that of PTS system N-acetylmuramic acid-specific EIIBC component (murP) from Escherichia coli O157:H7.